Consider the following 430-residue polypeptide: Small ribosomal subunit protein uS5m (430 aa).

The S5 DRBM domain maps to 218–282 (FDTRILEVRN…NRAVHHLHYI (65 aa)).

This sequence belongs to the universal ribosomal protein uS5 family. Component of the mitochondrial small ribosomal subunit (mt-SSU). Mature mammalian 55S mitochondrial ribosomes consist of a small (28S) and a large (39S) subunit. The 28S small subunit contains a 12S ribosomal RNA (12S mt-rRNA) and 30 different proteins. The 39S large subunit contains a 16S rRNA (16S mt-rRNA), a copy of mitochondrial valine transfer RNA (mt-tRNA(Val)), which plays an integral structural role, and 52 different proteins.

It is found in the mitochondrion. This is Small ribosomal subunit protein uS5m (MRPS5) from Homo sapiens (Human).